A 155-amino-acid polypeptide reads, in one-letter code: Probable jacalin-related lectin 26 (155 aa).

Helical transmembrane passes span 26-48 (AYLY…IAMI) and 127-149 (VSFV…VLFL). A Jacalin-type lectin domain is found at 47-155 (MIRAGSVGKK…VLFLMKFKRS (109 aa)).

This sequence belongs to the jacalin lectin family.

The protein localises to the membrane. This is Probable jacalin-related lectin 26 (JAL26) from Arabidopsis thaliana (Mouse-ear cress).